A 282-amino-acid polypeptide reads, in one-letter code: Probable transcription factor At1g66420 (282 aa).

Residues serine 33 to glutamate 73 form a disordered region.

The protein belongs to the GeBP family.

The protein is Probable transcription factor At1g66420 of Arabidopsis thaliana (Mouse-ear cress).